The chain runs to 559 residues: TBC1 domain family member 24 (559 aa).

A 1,2-diacyl-sn-glycero-3-phospho-(1D-myo-inositol)-binding positions include K36, R40, K238, R242, and R293–R297. The Rab-GAP TBC domain occupies S47–S262. Residues E343 to Q554 enclose the TLDc domain. S473 and S480 each carry phosphoserine.

Interacts with ARF6. As to expression, highest expression in brain.

The protein localises to the cell membrane. It localises to the cytoplasm. Its subcellular location is the cytoplasmic vesicle membrane. It is found in the presynapse. May act as a GTPase-activating protein for Rab family protein(s). Involved in neuronal projections development, probably through a negative modulation of ARF6 function. Involved in the regulation of synaptic vesicle trafficking. The sequence is that of TBC1 domain family member 24 (TBC1D24) from Homo sapiens (Human).